A 95-amino-acid polypeptide reads, in one-letter code: Large ribosomal subunit protein eL30 (95 aa).

It belongs to the eukaryotic ribosomal protein eL30 family.

This is Large ribosomal subunit protein eL30 from Methanospirillum hungatei JF-1 (strain ATCC 27890 / DSM 864 / NBRC 100397 / JF-1).